A 60-amino-acid polypeptide reads, in one-letter code: Defensin MGD-1 (60 aa).

Cystine bridges form between C4–C25, C10–C33, C14–C35, and C21–C38. W28 bears the 3-hydroxytryptophan mark. Residue C38 is modified to Cysteine amide. Positions 39–60 (GGRREDVEDIFDIFDNEAADRF) are excised as a propeptide.

This sequence belongs to the invertebrate defensin family. Type 2 subfamily. Post-translationally, the hydroxylation of the Trp-28 is not important for the antibacterial activity. In terms of tissue distribution, abundantly expressed in hemocytes.

The protein localises to the secreted. Its function is as follows. Active against both Gram-positive and Gram-negative bacteria but is not cytotoxic towards human erythrocytes or protozoa. The sequence is that of Defensin MGD-1 (FH3) from Mytilus galloprovincialis (Mediterranean mussel).